Reading from the N-terminus, the 144-residue chain is MQRISALGLDLGHRRIGVAGCDGTGLIATGLTTIRRTSFTKDMEILRQIVVDRQVKTLVVGLPYTMKGEVGTQAQKTQKLAKRIAKALDLPLDFIDERLTSHEAESMMREQRINPAEQKGMIDRKAAALILQRWLDQKPWLSST.

This sequence belongs to the YqgF nuclease family.

It is found in the cytoplasm. Functionally, could be a nuclease involved in processing of the 5'-end of pre-16S rRNA. In Acaryochloris marina (strain MBIC 11017), this protein is Putative pre-16S rRNA nuclease.